Consider the following 669-residue polypeptide: Probable pectinesterase/pectinesterase inhibitor 21 (669 aa).

Residues 16 to 36 (IVITISSVLLISMVVAVTVGV) form a helical membrane-spanning segment. Residues N52, N81, N94, N281, and N300 are each glycosylated (N-linked (GlcNAc...) asparagine). The tract at residues 52-205 (NASVKAVKDV…IELTHNGLAI (154 aa)) is pectinesterase inhibitor 21. The pectinesterase 21 stretch occupies residues 255 to 551 (DIVVAQDGSG…FTPAQYIQGD (297 aa)). The substrate site is built by T330 and Q360. D383 serves as the catalytic Proton donor; for pectinesterase activity. The cysteines at positions 397 and 417 are disulfide-linked. The Nucleophile; for pectinesterase activity role is filled by D404. An N-linked (GlcNAc...) asparagine glycan is attached at N416. R472 and W474 together coordinate substrate. Positions 615 to 669 (AYTGTASPESSIKVSSSTETASPESSFTEASTASPESSIMVASTESSGSFFSMFT) are disordered. Residues 616–628 (YTGTASPESSIKV) show a composition bias toward polar residues. The span at 629–652 (SSSTETASPESSFTEASTASPESS) shows a compositional bias: low complexity. The segment covering 654–669 (MVASTESSGSFFSMFT) has biased composition (polar residues).

The protein in the N-terminal section; belongs to the PMEI family. It in the C-terminal section; belongs to the pectinesterase family. Expressed in flower buds.

Its subcellular location is the membrane. The enzyme catalyses [(1-&gt;4)-alpha-D-galacturonosyl methyl ester](n) + n H2O = [(1-&gt;4)-alpha-D-galacturonosyl](n) + n methanol + n H(+). It participates in glycan metabolism; pectin degradation; 2-dehydro-3-deoxy-D-gluconate from pectin: step 1/5. Functionally, acts in the modification of cell walls via demethylesterification of cell wall pectin. The sequence is that of Probable pectinesterase/pectinesterase inhibitor 21 (PME21) from Arabidopsis thaliana (Mouse-ear cress).